A 700-amino-acid polypeptide reads, in one-letter code: Elongation factor G (700 aa).

The tr-type G domain maps to 8–290 (ERYRNIGISA…AVVEYLPSPV (283 aa)). Residues 17–24 (AHIDAGKT), 88–92 (DTPGH), and 142–145 (NKMD) contribute to the GTP site.

The protein belongs to the TRAFAC class translation factor GTPase superfamily. Classic translation factor GTPase family. EF-G/EF-2 subfamily.

The protein resides in the cytoplasm. Catalyzes the GTP-dependent ribosomal translocation step during translation elongation. During this step, the ribosome changes from the pre-translocational (PRE) to the post-translocational (POST) state as the newly formed A-site-bound peptidyl-tRNA and P-site-bound deacylated tRNA move to the P and E sites, respectively. Catalyzes the coordinated movement of the two tRNA molecules, the mRNA and conformational changes in the ribosome. The sequence is that of Elongation factor G from Mannheimia succiniciproducens (strain KCTC 0769BP / MBEL55E).